A 428-amino-acid polypeptide reads, in one-letter code: 3-phosphoshikimate 1-carboxyvinyltransferase (428 aa).

Lysine 22, serine 23, and arginine 27 together coordinate 3-phosphoshikimate. Lysine 22 serves as a coordination point for phosphoenolpyruvate. The phosphoenolpyruvate site is built by glycine 96 and arginine 124. 3-phosphoshikimate-binding residues include serine 169, serine 170, glutamine 171, serine 197, aspartate 313, asparagine 336, and lysine 340. Glutamine 171 is a binding site for phosphoenolpyruvate. The active-site Proton acceptor is the aspartate 313. Residues arginine 344, arginine 386, and lysine 411 each contribute to the phosphoenolpyruvate site.

The protein belongs to the EPSP synthase family. In terms of assembly, monomer.

Its subcellular location is the cytoplasm. It catalyses the reaction 3-phosphoshikimate + phosphoenolpyruvate = 5-O-(1-carboxyvinyl)-3-phosphoshikimate + phosphate. It participates in metabolic intermediate biosynthesis; chorismate biosynthesis; chorismate from D-erythrose 4-phosphate and phosphoenolpyruvate: step 6/7. In terms of biological role, catalyzes the transfer of the enolpyruvyl moiety of phosphoenolpyruvate (PEP) to the 5-hydroxyl of shikimate-3-phosphate (S3P) to produce enolpyruvyl shikimate-3-phosphate and inorganic phosphate. In Photorhabdus laumondii subsp. laumondii (strain DSM 15139 / CIP 105565 / TT01) (Photorhabdus luminescens subsp. laumondii), this protein is 3-phosphoshikimate 1-carboxyvinyltransferase.